The primary structure comprises 589 residues: Probable translation initiation factor IF-2 (589 aa).

Positions 3 to 224 (VRSPFVVVMG…AGVSQRFIPR (222 aa)) constitute a tr-type G domain. Positions 12-19 (GHVDVGKT) are G1. 12–19 (GHVDVGKT) is a binding site for GTP. Positions 37–41 (MITQH) are G2. The segment at 78 to 81 (DTPG) is G3. GTP-binding positions include 78–82 (DTPGH) and 132–135 (NKLD). A G4 region spans residues 132–135 (NKLD). The G5 stretch occupies residues 200 to 202 (SAV).

It belongs to the TRAFAC class translation factor GTPase superfamily. Classic translation factor GTPase family. IF-2 subfamily.

Function in general translation initiation by promoting the binding of the formylmethionine-tRNA to ribosomes. Seems to function along with eIF-2. This is Probable translation initiation factor IF-2 from Pyrobaculum neutrophilum (strain DSM 2338 / JCM 9278 / NBRC 100436 / V24Sta) (Thermoproteus neutrophilus).